Consider the following 641-residue polypeptide: DEAD-box ATP-dependent RNA helicase 50 (641 aa).

Disordered stretches follow at residues 86–115 (SMPS…IGNF), 129–189 (RSAH…LNSV), and 197–216 (DDLD…WGNI). The segment covering 150 to 159 (PSDESDEDGT) has biased composition (acidic residues). Positions 240–268 (RSFKEIGCSDEILGALRSFGFPRPSHIQA) match the Q motif motif. The Helicase ATP-binding domain maps to 271 to 452 (YRPVLEGKSC…VETFPDCELI (182 aa)). 284–291 (DQSGSGKT) provides a ligand contact to ATP. The short motif at 399 to 402 (DEVD) is the DEAD box element. Residues 487–641 (NKKSALVKII…GHPLHDVPCV (155 aa)) enclose the Helicase C-terminal domain.

It belongs to the DEAD box helicase family.

It catalyses the reaction ATP + H2O = ADP + phosphate + H(+). Probably involved in resistance to biotic and abiotic stresses. Confers tolerance to oxidative stress and mediates pathogenesis-related (PR) genes expression. Exhibits RNA-dependent ATPase and ATP-dependent RNA helicase activities in vitro. This chain is DEAD-box ATP-dependent RNA helicase 50, found in Oryza sativa subsp. japonica (Rice).